A 293-amino-acid chain; its full sequence is Fructose-bisphosphate aldolase (293 aa).

Residue S50 participates in D-glyceraldehyde 3-phosphate binding. D85 functions as the Proton donor in the catalytic mechanism. Positions 86, 106, 136, and 178 each coordinate Zn(2+). Position 179 (G179) interacts with dihydroxyacetone phosphate. H208 provides a ligand contact to Zn(2+). Residues 209 to 211 and 230 to 233 contribute to the dihydroxyacetone phosphate site; these read GGS and NVNT.

This sequence belongs to the class II fructose-bisphosphate aldolase family. It depends on Zn(2+) as a cofactor.

It carries out the reaction beta-D-fructose 1,6-bisphosphate = D-glyceraldehyde 3-phosphate + dihydroxyacetone phosphate. The protein operates within carbohydrate degradation; glycolysis; D-glyceraldehyde 3-phosphate and glycerone phosphate from D-glucose: step 4/4. In terms of biological role, catalyzes the aldol condensation of dihydroxyacetone phosphate (DHAP or glycerone-phosphate) with glyceraldehyde 3-phosphate (G3P) to form fructose 1,6-bisphosphate (FBP) in gluconeogenesis and the reverse reaction in glycolysis. This is Fructose-bisphosphate aldolase (fba) from Streptococcus pyogenes serotype M6 (strain ATCC BAA-946 / MGAS10394).